Here is a 231-residue protein sequence, read N- to C-terminus: D-allulose-6-phosphate 3-epimerase (231 aa).

Serine 6 contacts substrate. A divalent metal cation contacts are provided by histidine 30, aspartate 32, and histidine 63. The active-site Proton acceptor is aspartate 32. Substrate is bound by residues histidine 63, 140–143, 173–175, and 195–197; these read GFAG, DGS, and GTS. Aspartate 173 serves as a coordination point for a divalent metal cation. Residue aspartate 173 is the Proton donor of the active site.

It belongs to the ribulose-phosphate 3-epimerase family. AlsE subfamily. Homohexamer. Trimer of dimers. The cofactor is Co(2+). Requires Mn(2+) as cofactor. Zn(2+) serves as cofactor.

The catalysed reaction is D-allulose 6-phosphate = keto-D-fructose 6-phosphate. The protein operates within carbohydrate degradation; D-allose degradation. Its function is as follows. Catalyzes the reversible epimerization of D-allulose 6-phosphate to D-fructose 6-phosphate. Can also catalyze with lower efficiency the reversible epimerization of D-ribulose 5-phosphate to D-xylulose 5-phosphate. This is D-allulose-6-phosphate 3-epimerase from Escherichia coli (strain K12).